Here is a 153-residue protein sequence, read N- to C-terminus: Hydrogenase expression/formation protein HoxT (153 aa).

The protein belongs to the HupJ family.

The polypeptide is Hydrogenase expression/formation protein HoxT (hoxT) (Azotobacter vinelandii).